A 244-amino-acid polypeptide reads, in one-letter code: Putative quercetin 2,3-dioxygenase Mb0187c (244 aa).

A divalent metal cation contacts are provided by His60, His62, His104, and Glu106.

Belongs to the pirin family. It depends on a divalent metal cation as a cofactor.

It carries out the reaction quercetin + O2 = 2-(3,4-dihydroxybenzoyloxy)-4,6-dihydroxybenzoate + CO. The protein operates within flavonoid metabolism; quercetin degradation. In terms of biological role, putative quercetin 2,3-dioxygenase. This Mycobacterium bovis (strain ATCC BAA-935 / AF2122/97) protein is Putative quercetin 2,3-dioxygenase Mb0187c.